A 1702-amino-acid chain; its full sequence is Dicer-like protein 4 (1702 aa).

Disordered stretches follow at residues 1 to 52 and 89 to 120; these read MRDE…SAAT and SSSSVSSFSSSSSSLFSAAGTDDPSPKMEKDP. The span at 17-31 shows a compositional bias: basic and acidic residues; that stretch reads GKRDREQKNCEEEKN. Positions 89–105 are enriched in low complexity; sequence SSSSVSSFSSSSSSLFS. Positions 131 to 307 constitute a Helicase ATP-binding domain; the sequence is LCKKATEENV…SENLSKSINS (177 aa). An ATP-binding site is contributed by 144-151; the sequence is LGTGCGKT. The short motif at 251–254 is the DECH box element; it reads DECH. The Helicase C-terminal domain occupies 475–629; sequence QLIKILSVFR…RMNLEITYRS (155 aa). A Dicer dsRNA-binding fold domain is found at 656 to 748; that stretch reads SISLLYKYCS…LPDSKDEIED (93 aa). The PAZ domain maps to 932–1054; sequence LVEDIFPPSG…IPPELSHLKI (123 aa). RNase III domains lie at 1083 to 1251 and 1292 to 1436; these read ELKH…VDSG and LETL…LDCG. Residues Glu1330, Asp1422, and Glu1425 each contribute to the Mg(2+) site. 2 consecutive DRBM domains span residues 1462–1528 and 1621–1697; these read SPIK…NLKA and TAKS…CLKH.

It belongs to the helicase family. Dicer subfamily. In terms of assembly, interacts with DRB4. Requires Mg(2+) as cofactor. Mn(2+) is required as a cofactor.

The protein localises to the nucleus. Its function is as follows. Ribonuclease (RNase) III involved in RNA-mediated post-transcriptional gene silencing (PTGS). Functions in the biogenesis of trans-acting small interfering RNAs (ta-siRNAs, derived from the TAS1, TAS2 or TAS3 endogenous transcripts) by cleaving small dsRNAs into 21-24 nucleotide ta-siRNAs. Functions with the dsRNA-binding protein DRB4 in ta-siRNAs processing. Acts in the RDR6/SGS3/DCL4/AGO7 ta-siRNA pathway involved in leaf developmental timing. Plays a role in transitive silencing of transgenes by processing secondary siRNAs. This pathway, which requires DCL2 and RDR6, amplifies silencing by using the target RNA as substrate to generate secondary siRNAs, providing an efficient mechanism for long-distance silencing. Required for the production of the 30-40 nucleotide bacterial-induced long siRNAs (lsiRNA). May participate with DCL3 in the production of 24 nucleotide repeat-associated siRNAs (ra-siRNAs) which derive from heterochromatin and DNA repeats such as transposons. Plays an important role in antiviral RNA silencing. Involved in the production of viral siRNAs derived from the cucumber mosaic virus (CMV), turnip crinkle virus (TCV) and tobacco rattle virus (TRV). Targeted by the viral silencing suppressor (VSR) protein 2b of the cucumber mosaic virus (CMV) that inactivates DCL4 function in RNA silencing. Does not seem to be involved in microRNAs (miRNAs) processing. This Arabidopsis thaliana (Mouse-ear cress) protein is Dicer-like protein 4 (DCL4).